The chain runs to 156 residues: Large ribosomal subunit protein uL23 (156 aa).

Residues 1–19 show a composition bias toward basic and acidic residues; the sequence is MAPKAKKEAPAPPKVEAKA. Positions 1–67 are disordered; sequence MAPKAKKEAP…PKYPRKSAPR (67 aa). A N,N,N-trimethylalanine modification is found at Ala-2. Lys-14 participates in a covalent cross-link: Glycyl lysine isopeptide (Lys-Gly) (interchain with G-Cter in SUMO2). Basic residues predominate over residues 20–67; that stretch reads KALKAKKAVLKGVHSHKKKKIRTSPTFRRPKTLRLRRQPKYPRKSAPR. The beta-like import receptor binding (BIB) domain stretch occupies residues 32 to 74; it reads VHSHKKKKIRTSPTFRRPKTLRLRRQPKYPRKSAPRRNKLDHY. Arg-41 carries the citrulline modification. Ser-43 carries the post-translational modification Phosphoserine. Thr-45 carries the post-translational modification Phosphothreonine. N6-acetyllysine is present on Lys-70.

Belongs to the universal ribosomal protein uL23 family. As to quaternary structure, component of the large ribosomal subunit. Interacts with LYAR and GNL2. Interacts with MDM2; this interaction may promote MDM2-mediated p53/TP53 polyubiquitination. Directly interacts (via BIB domain) with IPO5, IPO7, KPNB1 and TNPO1; these interactions are involved in RPL23A nuclear import for the assembly of ribosomal subunits. Interacts with IPO8. Post-translationally, N-terminus is methylated by METTL11A/NTM1. Citrullinated by PADI4.

It localises to the cytoplasm. It is found in the nucleus. Functionally, component of the large ribosomal subunit. The ribosome is a large ribonucleoprotein complex responsible for the synthesis of proteins in the cell. Binds a specific region on the 26S rRNA. May promote p53/TP53 degradation possibly through the stimulation of MDM2-mediated TP53 polyubiquitination. The sequence is that of Large ribosomal subunit protein uL23 (RPL23A) from Oryctolagus cuniculus (Rabbit).